The sequence spans 465 residues: UDP-N-acetylmuramoylalanine--D-glutamate ligase (465 aa).

Position 127–133 (127–133) interacts with ATP; sequence GSNGKST.

This sequence belongs to the MurCDEF family.

The protein resides in the cytoplasm. The enzyme catalyses UDP-N-acetyl-alpha-D-muramoyl-L-alanine + D-glutamate + ATP = UDP-N-acetyl-alpha-D-muramoyl-L-alanyl-D-glutamate + ADP + phosphate + H(+). The protein operates within cell wall biogenesis; peptidoglycan biosynthesis. Functionally, cell wall formation. Catalyzes the addition of glutamate to the nucleotide precursor UDP-N-acetylmuramoyl-L-alanine (UMA). This is UDP-N-acetylmuramoylalanine--D-glutamate ligase from Cereibacter sphaeroides (strain ATCC 17025 / ATH 2.4.3) (Rhodobacter sphaeroides).